A 187-amino-acid polypeptide reads, in one-letter code: dCTP deaminase, dUMP-forming (187 aa).

Residues Lys101–Arg106 and Asp119 each bind dCTP. Catalysis depends on Glu129, which acts as the Proton donor/acceptor. Residues Gln148, Tyr162, and Gln174 each contribute to the dCTP site.

It belongs to the dCTP deaminase family. Homotrimer.

It catalyses the reaction dCTP + 2 H2O = dUMP + NH4(+) + diphosphate. Its pathway is pyrimidine metabolism; dUMP biosynthesis; dUMP from dCTP: step 1/1. Bifunctional enzyme that catalyzes both the deamination of dCTP to dUTP and the hydrolysis of dUTP to dUMP without releasing the toxic dUTP intermediate. The sequence is that of dCTP deaminase, dUMP-forming from Corynebacterium kroppenstedtii (strain DSM 44385 / JCM 11950 / CIP 105744 / CCUG 35717).